The sequence spans 179 residues: Transcription factor 21 (179 aa).

Positions 23–87 (IKLDPNKEFG…QVQRNAANAR (65 aa)) are disordered. Over residues 34 to 46 (SNDSNEESSTCDN) the composition is skewed to polar residues. Basic residues predominate over residues 50-64 (KKGRGTSGKRRKAPS). A compositionally biased stretch (polar residues) spans 70–80 (GNINQEGKQVQ). Positions 79-131 (VQRNAANARERARMRVLSKAFSRLKTTLPWVPPDTKLSKLDTLRLASSYIAHL) constitute a bHLH domain.

Efficient DNA binding requires dimerization with another bHLH protein.

It is found in the nucleus. Functionally, involved in epithelial-mesenchymal interactions in kidney and lung morphogenesis that include epithelial differentiation and branching morphogenesis. This is Transcription factor 21 (tcf21) from Xenopus tropicalis (Western clawed frog).